The chain runs to 235 residues: MPFFVNVKISKSVFRSFRLSFSSFQDFSVFFFNSFNCLHSMLKFVNLDSKSQFKSLVESNSFMKDFFWLVSSSILSLNDSLICLRDLICSFLASLEDCNFLHSTNKFSLSSKVKFISFDEFAVSTPLWELLPANSGSTSFVSLLLKILEIENRFVLSPSSPLPHSSAFKLAILVTPFVETLSWLNELSMLFAYCPAELSLSLFFLCLLLWDIFERLVESLDRCVFTRLYSTLWSY.

Helical transmembrane passes span 167–187 (AFKL…LNEL) and 190–210 (LFAY…LLLW).

Its subcellular location is the membrane. This is an uncharacterized protein from Saccharomyces cerevisiae (strain ATCC 204508 / S288c) (Baker's yeast).